A 180-amino-acid chain; its full sequence is Translation initiation factor IF-3 (180 aa).

It belongs to the IF-3 family. Monomer.

The protein localises to the cytoplasm. IF-3 binds to the 30S ribosomal subunit and shifts the equilibrium between 70S ribosomes and their 50S and 30S subunits in favor of the free subunits, thus enhancing the availability of 30S subunits on which protein synthesis initiation begins. The protein is Translation initiation factor IF-3 of Escherichia coli (strain K12 / MC4100 / BW2952).